Consider the following 85-residue polypeptide: uncharacterized protein (85 aa).

This sequence belongs to the herpesviridae UL91 family.

This is an uncharacterized protein from Alcelaphine herpesvirus 1 (strain C500) (AlHV-1).